The chain runs to 228 residues: U1 small nuclear ribonucleoprotein C-2 (228 aa).

The Matrin-type zinc finger occupies 4-36; the sequence is YYCDYCDTYLTHDSPSVRKQHNAGYKHKANVRT. Residues 105–228 are disordered; it reads PGVRPPILPA…SYALPSEGNH (124 aa). Composition is skewed to pro residues over residues 107–156 and 164–175; these read VRPP…PPGS and LPRPPTLPPPTS. Residues 178–190 show a composition bias toward low complexity; that stretch reads PGAPIPNSAAPPA. Residues 196–214 are compositionally biased toward pro residues; sequence PPAPAGPTSGAPPAPPTAP.

This sequence belongs to the U1 small nuclear ribonucleoprotein C family. As to quaternary structure, U1 snRNP is composed of the 7 core Sm proteins B/B', D1, D2, D3, E, F and G that assemble in a heptameric protein ring on the Sm site of the small nuclear RNA to form the core snRNP, and at least 3 U1 snRNP-specific proteins U1-70K, U1-A and U1-C. U1-C interacts with U1 snRNA and the 5' splice-site region of the pre-mRNA.

It is found in the nucleus. In terms of biological role, component of the spliceosomal U1 snRNP, which is essential for recognition of the pre-mRNA 5' splice-site and the subsequent assembly of the spliceosome. U1-C is directly involved in initial 5' splice-site recognition for both constitutive and regulated alternative splicing. The interaction with the 5' splice-site seems to precede base-pairing between the pre-mRNA and the U1 snRNA. Stimulates commitment or early (E) complex formation by stabilizing the base pairing of the 5' end of the U1 snRNA and the 5' splice-site region. This chain is U1 small nuclear ribonucleoprotein C-2, found in Sorghum bicolor (Sorghum).